Reading from the N-terminus, the 238-residue chain is MSSIALGVNIDHIATLRNARNTEYPDLVEIANIAVNNGADFITVHLREDRRHIRDSDVFRLKDNLNVPLNLEIAAIDEMLAIAIAVQPECVCLVPEKRQELTTEGGLDVKNMFTYLMPFITQLHNHNIKVTLFVEPDINQINYAKKLSVDNIELHTGVYCNHNTQNELNRILEAAKHCYTNKIECHAGHGLDYQSAATIARVPYISALNIGHFLICEAVLHGIGTSIYKMKKVITNPL.

Residue N9 coordinates 3-amino-2-oxopropyl phosphate. 11–12 is a 1-deoxy-D-xylulose 5-phosphate binding site; it reads DH. 3-amino-2-oxopropyl phosphate is bound at residue R20. The active-site Proton acceptor is the H45. 1-deoxy-D-xylulose 5-phosphate contacts are provided by R47 and H52. The active-site Proton acceptor is the E72. Position 102 (T102) interacts with 1-deoxy-D-xylulose 5-phosphate. Residue H189 is the Proton donor of the active site. Residues G190 and 211 to 212 contribute to the 3-amino-2-oxopropyl phosphate site; that span reads GH.

Belongs to the PNP synthase family. Homooctamer; tetramer of dimers.

Its subcellular location is the cytoplasm. The catalysed reaction is 3-amino-2-oxopropyl phosphate + 1-deoxy-D-xylulose 5-phosphate = pyridoxine 5'-phosphate + phosphate + 2 H2O + H(+). It functions in the pathway cofactor biosynthesis; pyridoxine 5'-phosphate biosynthesis; pyridoxine 5'-phosphate from D-erythrose 4-phosphate: step 5/5. Catalyzes the complicated ring closure reaction between the two acyclic compounds 1-deoxy-D-xylulose-5-phosphate (DXP) and 3-amino-2-oxopropyl phosphate (1-amino-acetone-3-phosphate or AAP) to form pyridoxine 5'-phosphate (PNP) and inorganic phosphate. In Ehrlichia ruminantium (strain Welgevonden), this protein is Pyridoxine 5'-phosphate synthase.